The following is a 75-amino-acid chain: UPF0352 protein YejL (75 aa).

This sequence belongs to the UPF0352 family.

The protein is UPF0352 protein YejL of Escherichia coli O127:H6 (strain E2348/69 / EPEC).